Reading from the N-terminus, the 404-residue chain is Biflaviolin synthase CYP158A2 (404 aa).

Residues Arg-288 and Leu-293 each coordinate flaviolin. Cys-353 contributes to the heme binding site.

The protein belongs to the cytochrome P450 family. Heme is required as a cofactor.

It carries out the reaction 2 flaviolin + 2 reduced [2Fe-2S]-[ferredoxin] + O2 + H(+) = 3,3'-biflaviolin + 2 oxidized [2Fe-2S]-[ferredoxin] + 2 H2O. It catalyses the reaction 2 flaviolin + 2 reduced [2Fe-2S]-[ferredoxin] + O2 + H(+) = 3,8'-biflaviolin + 2 oxidized [2Fe-2S]-[ferredoxin] + 2 H2O. The protein operates within pigment biosynthesis. Functionally, catalyzes oxidative C-C coupling reaction to polymerize flaviolin and form highly conjugated pigments which protect the soil bacterium from deleterious effects of UV irradiation (three isomers of biflaviolin and one triflaviolin). This is Biflaviolin synthase CYP158A2 from Streptomyces coelicolor (strain ATCC BAA-471 / A3(2) / M145).